The chain runs to 79 residues: Acyl carrier protein (79 aa).

In terms of domain architecture, Carrier spans 2–77 (SDIADKVKKI…DAIDYIEKQK (76 aa)). Residue S37 is modified to O-(pantetheine 4'-phosphoryl)serine.

This sequence belongs to the acyl carrier protein (ACP) family. In terms of processing, 4'-phosphopantetheine is transferred from CoA to a specific serine of apo-ACP by AcpS. This modification is essential for activity because fatty acids are bound in thioester linkage to the sulfhydryl of the prosthetic group.

It localises to the cytoplasm. It participates in lipid metabolism; fatty acid biosynthesis. Carrier of the growing fatty acid chain in fatty acid biosynthesis. The protein is Acyl carrier protein of Gluconobacter oxydans (strain 621H) (Gluconobacter suboxydans).